Consider the following 277-residue polypeptide: Probable ABC transporter permease protein y4oR (277 aa).

Helical transmembrane passes span L15–V35, V79–L99, L109–Y129, T140–M160, I189–V209, F213–G233, and W242–I262. The ABC transmembrane type-1 domain maps to I74–M263.

This sequence belongs to the binding-protein-dependent transport system permease family. MalFG subfamily.

It localises to the cell inner membrane. Its function is as follows. Probably part of the binding-protein-dependent transport system y4oPQRS. This system probably transports a sugar-like molecule. Probably responsible for the translocation of the substrate across the membrane. The sequence is that of Probable ABC transporter permease protein y4oR from Sinorhizobium fredii (strain NBRC 101917 / NGR234).